The following is a 365-amino-acid chain: Fructose-1,6-bisphosphatase class 1 2 (365 aa).

Residues E100, D122, L124, and D125 each coordinate Mg(2+). Residues 125 to 128 (DGSS) and N221 each bind substrate. E293 contributes to the Mg(2+) binding site.

It belongs to the FBPase class 1 family. Homotetramer. The cofactor is Mg(2+).

The protein resides in the cytoplasm. The catalysed reaction is beta-D-fructose 1,6-bisphosphate + H2O = beta-D-fructose 6-phosphate + phosphate. It functions in the pathway carbohydrate biosynthesis; gluconeogenesis. The chain is Fructose-1,6-bisphosphatase class 1 2 from Leptothrix cholodnii (strain ATCC 51168 / LMG 8142 / SP-6) (Leptothrix discophora (strain SP-6)).